The sequence spans 89 residues: Small ribosomal subunit protein uS14 (89 aa).

This sequence belongs to the universal ribosomal protein uS14 family. As to quaternary structure, part of the 30S ribosomal subunit. Contacts proteins S3 and S10.

In terms of biological role, binds 16S rRNA, required for the assembly of 30S particles and may also be responsible for determining the conformation of the 16S rRNA at the A site. This chain is Small ribosomal subunit protein uS14, found in Streptococcus pneumoniae serotype 2 (strain D39 / NCTC 7466).